Reading from the N-terminus, the 244-residue chain is Ribosomal RNA large subunit methyltransferase E (244 aa).

A disordered region spans residues 1-23 (MATGGKKSAGRTTGSGPAGGSRN). Gly-91, Trp-93, Asp-116, Asp-132, and Asp-156 together coordinate S-adenosyl-L-methionine. The active-site Proton acceptor is Lys-196.

Belongs to the class I-like SAM-binding methyltransferase superfamily. RNA methyltransferase RlmE family.

Its subcellular location is the cytoplasm. It catalyses the reaction uridine(2552) in 23S rRNA + S-adenosyl-L-methionine = 2'-O-methyluridine(2552) in 23S rRNA + S-adenosyl-L-homocysteine + H(+). In terms of biological role, specifically methylates the uridine in position 2552 of 23S rRNA at the 2'-O position of the ribose in the fully assembled 50S ribosomal subunit. The sequence is that of Ribosomal RNA large subunit methyltransferase E from Paramagnetospirillum magneticum (strain ATCC 700264 / AMB-1) (Magnetospirillum magneticum).